Consider the following 358-residue polypeptide: Homoserine O-acetyltransferase (358 aa).

The region spanning 41–343 (NAVLICHALT…DYGHDAFLVD (303 aa)) is the AB hydrolase-1 domain. The active-site Nucleophile is Ser-143. A substrate-binding site is contributed by Arg-212. Catalysis depends on residues Asp-304 and His-337. Asp-338 lines the substrate pocket.

The protein belongs to the AB hydrolase superfamily. MetX family. In terms of assembly, homodimer.

It localises to the cytoplasm. It catalyses the reaction L-homoserine + acetyl-CoA = O-acetyl-L-homoserine + CoA. It functions in the pathway amino-acid biosynthesis; L-methionine biosynthesis via de novo pathway; O-acetyl-L-homoserine from L-homoserine: step 1/1. Functionally, transfers an acetyl group from acetyl-CoA to L-homoserine, forming acetyl-L-homoserine. This Haemophilus influenzae (strain 86-028NP) protein is Homoserine O-acetyltransferase.